Consider the following 336-residue polypeptide: Eukaryotic translation initiation factor 3 subunit I (336 aa).

WD repeat units follow at residues 8-47 (GHERSLNQIKFNRDGDLLFSVAKDKIVCAWWSANGERLGT), 50-91 (GHLG…KVWE), 146-185 (CTESKATVAGWSYLGKYIIAGHEDGSVSQYDAKTGEQLEN), 190-229 (EFDHQINDLQFSPDRTHFLTASKDKSAKLMSSRNLAILKT), and 287-326 (GHFGPLNTIHVHPAGTAYASGGEDGYVRVHHFDKPYFDFM).

The protein belongs to the eIF-3 subunit I family. Component of the eukaryotic translation initiation factor 3 (eIF-3) complex.

The protein localises to the cytoplasm. In terms of biological role, component of the eukaryotic translation initiation factor 3 (eIF-3) complex, which is involved in protein synthesis of a specialized repertoire of mRNAs and, together with other initiation factors, stimulates binding of mRNA and methionyl-tRNAi to the 40S ribosome. The eIF-3 complex specifically targets and initiates translation of a subset of mRNAs involved in cell proliferation. In Emericella nidulans (strain FGSC A4 / ATCC 38163 / CBS 112.46 / NRRL 194 / M139) (Aspergillus nidulans), this protein is Eukaryotic translation initiation factor 3 subunit I (tif34).